We begin with the raw amino-acid sequence, 156 residues long: Protein SprT (156 aa).

The SprT-like domain maps to 15–153; that stretch reads NRYFNKHFTP…CKKCKEILVL (139 aa). H67 lines the Zn(2+) pocket. Residue E68 is part of the active site. H71 serves as a coordination point for Zn(2+).

Belongs to the SprT family. It depends on Zn(2+) as a cofactor.

The protein resides in the cytoplasm. This Glaesserella parasuis serovar 5 (strain SH0165) (Haemophilus parasuis) protein is Protein SprT.